The chain runs to 381 residues: Estradiol 17-beta-dehydrogenase 2 (381 aa).

The helical; Signal-anchor for type II membrane protein transmembrane segment at 4–24 (FASESAWLCLAAAAVLGGTLL) threads the bilayer. 83–112 (QKAVLVTGADSGFGHGLAKHLDKLGFTVFA) serves as a coordination point for NAD(+). Ser-220 is a binding site for substrate. The active-site Proton acceptor is the Tyr-233.

Belongs to the short-chain dehydrogenases/reductases (SDR) family. Homodimer.

Its subcellular location is the endoplasmic reticulum membrane. The catalysed reaction is 17beta-estradiol + NAD(+) = estrone + NADH + H(+). It carries out the reaction testosterone + NAD(+) = androst-4-ene-3,17-dione + NADH + H(+). It catalyses the reaction 17beta-hydroxy-5alpha-androstan-3-one + NAD(+) = 5alpha-androstan-3,17-dione + NADH + H(+). The enzyme catalyses (20S)-hydroxypregn-4-en-3-one + NAD(+) = progesterone + NADH + H(+). Functionally, catalyzes the NAD-dependent oxidation of highly active 17beta-hydroxysteroids, such as estradiol (E2), testosterone (T), and dihydrotestosterone (DHT), to their less active forms and thus regulates the biological potency of these steroids. Oxidizes estradiol to estrone, testosterone to androstenedione, and dihydrotestosterone to 5alpha-androstan-3,17-dione. Also has 20-alpha-HSD activity. In Mus musculus (Mouse), this protein is Estradiol 17-beta-dehydrogenase 2 (Hsd17b2).